The sequence spans 568 residues: Sulfite reductase [NADPH] hemoprotein beta-component (568 aa).

Positions 425, 431, 470, and 474 each coordinate [4Fe-4S] cluster. Cysteine 474 provides a ligand contact to siroheme.

Belongs to the nitrite and sulfite reductase 4Fe-4S domain family. As to quaternary structure, alpha(8)-beta(8). The alpha component is a flavoprotein, the beta component is a hemoprotein. Siroheme serves as cofactor. [4Fe-4S] cluster is required as a cofactor.

The catalysed reaction is hydrogen sulfide + 3 NADP(+) + 3 H2O = sulfite + 3 NADPH + 4 H(+). It participates in sulfur metabolism; hydrogen sulfide biosynthesis; hydrogen sulfide from sulfite (NADPH route): step 1/1. In terms of biological role, component of the sulfite reductase complex that catalyzes the 6-electron reduction of sulfite to sulfide. This is one of several activities required for the biosynthesis of L-cysteine from sulfate. The polypeptide is Sulfite reductase [NADPH] hemoprotein beta-component (Xanthomonas oryzae pv. oryzae (strain MAFF 311018)).